We begin with the raw amino-acid sequence, 130 residues long: Small ribosomal subunit protein uS9 (130 aa).

A disordered region spans residues 109-130 (RMKERKKYGLKKARRAPQFSKR). Over residues 111–130 (KERKKYGLKKARRAPQFSKR) the composition is skewed to basic residues.

Belongs to the universal ribosomal protein uS9 family.

This chain is Small ribosomal subunit protein uS9, found in Clostridium kluyveri (strain NBRC 12016).